The following is a 321-amino-acid chain: Homoserine O-acetyltransferase (321 aa).

The active-site Acyl-thioester intermediate is the cysteine 142. Lysine 163 and serine 192 together coordinate substrate. Histidine 235 acts as the Proton acceptor in catalysis. Glutamate 237 is a catalytic residue. Substrate is bound at residue arginine 249.

Belongs to the MetA family.

The protein localises to the cytoplasm. It carries out the reaction L-homoserine + acetyl-CoA = O-acetyl-L-homoserine + CoA. The protein operates within amino-acid biosynthesis; L-methionine biosynthesis via de novo pathway; O-acetyl-L-homoserine from L-homoserine: step 1/1. Functionally, transfers an acetyl group from acetyl-CoA to L-homoserine, forming acetyl-L-homoserine. The sequence is that of Homoserine O-acetyltransferase from Lactococcus lactis subsp. lactis (strain IL1403) (Streptococcus lactis).